Here is a 286-residue protein sequence, read N- to C-terminus: ATP synthase gamma chain (286 aa).

This sequence belongs to the ATPase gamma chain family. In terms of assembly, F-type ATPases have 2 components, CF(1) - the catalytic core - and CF(0) - the membrane proton channel. CF(1) has five subunits: alpha(3), beta(3), gamma(1), delta(1), epsilon(1). CF(0) has three main subunits: a, b and c.

The protein resides in the cell inner membrane. In terms of biological role, produces ATP from ADP in the presence of a proton gradient across the membrane. The gamma chain is believed to be important in regulating ATPase activity and the flow of protons through the CF(0) complex. This Pseudoalteromonas atlantica (strain T6c / ATCC BAA-1087) protein is ATP synthase gamma chain.